The primary structure comprises 1205 residues: MGNLKSVGQEPGPPCGLGLGLGLGLCGKQGPASPAPEPSRAPAPATPHAPDHSPAPNSPTLTRPPEGPKFPRVKNWELGSITYDTLCAQSQQDGPCTPRCCLGSLVLPRKLQTRPSPGPPPAEQLLSQARDFINQYYSSIKRSGSQAHEERLQEVEAEVASTGTYHLRESELVFGAKQAWRNAPRCVGRIQWGKLQVFDARDCSSAQEMFTYICNHIKYATNRGNLRSAITVFPQRAPGRGDFRIWNSQLVRYAGYRQQDGSVRGDPANVEITELCIQHGWTPGNGRFDVLPLLLQAPDEAPELFVLPPELVLEVPLEHPTLEWFAALGLRWYALPAVSNMLLEIGGLEFSAAPFSGWYMSTEIGTRNLCDPHRYNILEDVAVCMDLDTRTTSSLWKDKAAVEINLAVLHSFQLAKVTIVDHHAATVSFMKHLDNEQKARGGCPADWAWIVPPISGSLTPVFHQEMVNYILSPAFRYQPDPWKGSATKGAGITRKKTFKEVANAVKISASLMGTLMAKRVKATILYASETGRAQSYAQQLGRLFRKAFDPRVLCMDEYDVVSLEHEALVLVVTSTFGNGDPPENGESFAAALMEMSGPYNSSPRPEQHKSYKIRFNSVSCSDPLVSSWRRKRKESSNTDSAGALGTLRFCVFGLGSRAYPHFCAFARAVDTRLEELGGERLLQLGQGDELCGQEEAFRGWAKAAFQASCETFCVGEEAKAAAQDIFSPKRSWKRQRYRLSTQAEGLQLLPGLIHVHRRKMFQATVLSVENLQSSKSTRATILVRLDTAGQEGLQYQPGDHIGICPPNRPGLVEALLSRVEDPPPPTESVAVEQLEKGSPGGPPPSWVRDPRLPPCTLRQALTFFLDITSPPSPRLLRLLSTLAEEPSEQQELETLSQDPRRYEEWKWFRCPTLLEVLEQFPSVALPAPLLLTQLPLLQPRYYSVSSAPNAHPGEVHLTVAVLAYRTQDGLGPLHYGVCSTWLSQLKTGDPVPCFIRGAPSFRLPPDPYVPCILVGPGTGIAPFRGFWQERLHDIESKGLQPAPMTLVFGCRCSQLDHLYRDEVQDAQERGVFGRVLTAFSREPDSPKTYVQDILRTELAAEVHRVLCLERGHMFVCGDVTMATSVLQTVQRILATEGDMELDEAGDVIGVLRDQQRYHEDIFGLTLRTQEVTSRIRTQSFSLQERHLRGAVPWAFDPPGPDTPGP.

Residues 1 to 73 are disordered; the sequence is MGNLKSVGQE…PPEGPKFPRV (73 aa). Residue G2 is the site of N-myristoyl glycine attachment. Residues C15 and C26 are each lipidated (S-palmitoyl cysteine). The segment covering 15–27 has biased composition (gly residues); it reads CGLGLGLGLGLCG. Residues 33–47 show a composition bias toward pro residues; the sequence is SPAPEPSRAPAPATP. C96 and C101 together coordinate Zn(2+). Residues 100-488 are interaction with NOSIP; sequence CCLGSLVLPR…PDPWKGSATK (389 aa). S104 is a (6R)-L-erythro-5,6,7,8-tetrahydrobiopterin binding site. S116 is subject to Phosphoserine; by CDK5. C186 provides a ligand contact to heme b. Q249, W358, Y359, E363, and N368 together coordinate L-arginine. Residues A448, W449, and F462 each contribute to the (6R)-L-erythro-5,6,7,8-tetrahydrobiopterin site. Y477 is a heme b binding site. The interval 492–512 is calmodulin-binding; the sequence is ITRKKTFKEVANAVKISASLM. At T497 the chain carries Phosphothreonine; by AMPK and PKA. One can recognise a Flavodoxin-like domain in the interval 522–705; that stretch reads ATILYASETG…AFRGWAKAAF (184 aa). The FMN site is built by S528, E529, T530, R532, S574, and T575. Residues S617, S635, and S640 each carry the phosphoserine modification. FMN contacts are provided by S656, C663, E689, and Q693. One can recognise an FAD-binding FR-type domain in the interval 758–1004; it reads RKMFQATVLS…IRGAPSFRLP (247 aa). R778 is an NADP(+) binding site. H800 contacts FAD. A disordered region spans residues 820–847; that stretch reads EDPPPPTESVAVEQLEKGSPGGPPPSWV. S838 is modified (phosphoserine). 9 residues coordinate FAD: R940, Y942, S943, T958, A960, Y964, V977, C978, and S979. Positions 1018, 1051, 1080, 1081, 1087, 1089, and 1091 each coordinate NADP(+). The residue at position 1177 (T1177) is a Phosphothreonine. S1179 carries the post-translational modification Phosphoserine; by AMPK, PDPK1 and PKA. S1181 carries the post-translational modification Phosphoserine.

This sequence belongs to the NOS family. Homodimer. Interacts with NOSIP and NOSTRIN. Interacts with HSP90AB1. Forms a complex with ASL, ASS1 and SLC7A1; the complex regulates cell-autonomous L-arginine synthesis and citrulline recycling while channeling extracellular L-arginine to nitric oxide synthesis pathway. It depends on heme b as a cofactor. Requires FAD as cofactor. The cofactor is FMN. (6R)-L-erythro-5,6,7,8-tetrahydrobiopterin is required as a cofactor. Post-translationally, phosphorylation by AMPK at Ser-1179 in the presence of Ca(2+)-calmodulin (CaM) activates activity. In absence of Ca(2+)-calmodulin, AMPK also phosphorylates Thr-497, resulting in inhibition of activity. Phosphorylation of Ser-116 by CDK5 reduces activity.

It is found in the cell membrane. Its subcellular location is the membrane. The protein localises to the caveola. The protein resides in the cytoplasm. It localises to the cytoskeleton. It is found in the golgi apparatus. It carries out the reaction 2 L-arginine + 3 NADPH + 4 O2 + H(+) = 2 L-citrulline + 2 nitric oxide + 3 NADP(+) + 4 H2O. Stimulated by calcium/calmodulin. Inhibited by NOSIP and NOSTRIN. Its function is as follows. Produces nitric oxide (NO) which is implicated in vascular smooth muscle relaxation through a cGMP-mediated signal transduction pathway. NO mediates vascular endothelial growth factor (VEGF)-induced angiogenesis in coronary vessels and promotes blood clotting through the activation of platelets. The chain is Nitric oxide synthase 3 (NOS3) from Bos taurus (Bovine).